The sequence spans 699 residues: Elongation factor G (699 aa).

The 283-residue stretch at 8–290 (NKYRNLGIMA…KVIELLPSPV (283 aa)) folds into the tr-type G domain. GTP-binding positions include 17–24 (AHIDAGKT), 88–92 (DTPGH), and 142–145 (NKMD).

The protein belongs to the TRAFAC class translation factor GTPase superfamily. Classic translation factor GTPase family. EF-G/EF-2 subfamily.

It localises to the cytoplasm. Its function is as follows. Catalyzes the GTP-dependent ribosomal translocation step during translation elongation. During this step, the ribosome changes from the pre-translocational (PRE) to the post-translocational (POST) state as the newly formed A-site-bound peptidyl-tRNA and P-site-bound deacylated tRNA move to the P and E sites, respectively. Catalyzes the coordinated movement of the two tRNA molecules, the mRNA and conformational changes in the ribosome. The chain is Elongation factor G from Dichelobacter nodosus (strain VCS1703A).